A 265-amino-acid polypeptide reads, in one-letter code: Orotidine 5'-phosphate decarboxylase (265 aa).

Residues Asp-38, 60-62 (KTH), 92-101 (DRKFADIGKT), Tyr-218, and Arg-236 contribute to the substrate site. Lys-94 acts as the Proton donor in catalysis.

It belongs to the OMP decarboxylase family.

It catalyses the reaction orotidine 5'-phosphate + H(+) = UMP + CO2. The protein operates within pyrimidine metabolism; UMP biosynthesis via de novo pathway; UMP from orotate: step 2/2. The sequence is that of Orotidine 5'-phosphate decarboxylase (URA3) from Cyberlindnera fabianii (Yeast).